The chain runs to 258 residues: Glucosamine-6-phosphate deaminase (258 aa).

The active-site Proton acceptor; for enolization step is the Asp65. Asp134 (for ring-opening step) is an active-site residue. The active-site Proton acceptor; for ring-opening step is the His136. Catalysis depends on Glu141, which acts as the For ring-opening step.

The protein belongs to the glucosamine/galactosamine-6-phosphate isomerase family. NagB subfamily.

The catalysed reaction is alpha-D-glucosamine 6-phosphate + H2O = beta-D-fructose 6-phosphate + NH4(+). Its pathway is amino-sugar metabolism; N-acetylneuraminate degradation; D-fructose 6-phosphate from N-acetylneuraminate: step 5/5. In terms of biological role, catalyzes the reversible isomerization-deamination of glucosamine 6-phosphate (GlcN6P) to form fructose 6-phosphate (Fru6P) and ammonium ion. This Corynebacterium kroppenstedtii (strain DSM 44385 / JCM 11950 / CIP 105744 / CCUG 35717) protein is Glucosamine-6-phosphate deaminase.